Reading from the N-terminus, the 261-residue chain is 5'-nucleotidase SurE (261 aa).

A divalent metal cation is bound by residues aspartate 8, aspartate 9, serine 39, and asparagine 94.

It belongs to the SurE nucleotidase family. It depends on a divalent metal cation as a cofactor.

It is found in the cytoplasm. It catalyses the reaction a ribonucleoside 5'-phosphate + H2O = a ribonucleoside + phosphate. Functionally, nucleotidase that shows phosphatase activity on nucleoside 5'-monophosphates. This is 5'-nucleotidase SurE from Methanopyrus kandleri (strain AV19 / DSM 6324 / JCM 9639 / NBRC 100938).